Here is a 344-residue protein sequence, read N- to C-terminus: Methionine import ATP-binding protein MetN (344 aa).

The region spanning Ile2–Ile241 is the ABC transporter domain. ATP is bound at residue Gly38–Ser45.

The protein belongs to the ABC transporter superfamily. Methionine importer (TC 3.A.1.24) family. In terms of assembly, the complex is composed of two ATP-binding proteins (MetN), two transmembrane proteins (MetI) and a solute-binding protein (MetQ).

The protein resides in the cell inner membrane. The enzyme catalyses L-methionine(out) + ATP + H2O = L-methionine(in) + ADP + phosphate + H(+). It carries out the reaction D-methionine(out) + ATP + H2O = D-methionine(in) + ADP + phosphate + H(+). Functionally, part of the ABC transporter complex MetNIQ involved in methionine import. Responsible for energy coupling to the transport system. This is Methionine import ATP-binding protein MetN from Vibrio vulnificus (strain CMCP6).